We begin with the raw amino-acid sequence, 852 residues long: Bifunctional uridylyltransferase/uridylyl-removing enzyme (852 aa).

Positions 1 to 318 are uridylyltransferase; sequence MPANLSSALE…STPLRVTLRI (318 aa). A uridylyl-removing region spans residues 319 to 672; it reads DDDYIQVNNQ…SRILPKSDSF (354 aa). Residues 436 to 558 enclose the HD domain; that stretch reads VDDHILTVVR…VQTHERLSAL (123 aa). ACT domains follow at residues 673-757 and 785-852; these read QVMV…SRSR and SVEI…EQLS.

Belongs to the GlnD family. The cofactor is Mg(2+).

It catalyses the reaction [protein-PII]-L-tyrosine + UTP = [protein-PII]-uridylyl-L-tyrosine + diphosphate. The enzyme catalyses [protein-PII]-uridylyl-L-tyrosine + H2O = [protein-PII]-L-tyrosine + UMP + H(+). With respect to regulation, uridylyltransferase (UTase) activity is inhibited by glutamine, while glutamine activates uridylyl-removing (UR) activity. Functionally, modifies, by uridylylation and deuridylylation, the PII regulatory proteins (GlnB and homologs), in response to the nitrogen status of the cell that GlnD senses through the glutamine level. Under low glutamine levels, catalyzes the conversion of the PII proteins and UTP to PII-UMP and PPi, while under higher glutamine levels, GlnD hydrolyzes PII-UMP to PII and UMP (deuridylylation). Thus, controls uridylylation state and activity of the PII proteins, and plays an important role in the regulation of nitrogen assimilation and metabolism. In Neisseria meningitidis serogroup B (strain ATCC BAA-335 / MC58), this protein is Bifunctional uridylyltransferase/uridylyl-removing enzyme.